We begin with the raw amino-acid sequence, 567 residues long: TGF-beta receptor type-2 (567 aa).

The first 23 residues, 1–23 (MGRGLLRGLWPLHIVLWTRIAST), serve as a signal peptide directing secretion. Residues 24–166 (IPPHVPKSVN…SPDLLLVIIQ (143 aa)) are Extracellular-facing. 6 cysteine pairs are disulfide-bonded: Cys51-Cys84, Cys54-Cys71, Cys61-Cys67, Cys77-Cys101, Cys121-Cys136, and Cys138-Cys143. N-linked (GlcNAc...) asparagine glycosylation is found at Asn70 and Asn94. Residues 167-187 (VTGVSLLPPLGIAIAVIAIFY) traverse the membrane as a helical segment. Over 188-567 (CYRVHRQQKL…PEDGSLNTTK (380 aa)) the chain is Cytoplasmic. Positions 244–546 (IELDTLVGKG…RFSELEHPDR (303 aa)) constitute a Protein kinase domain. Residues 250–258 (VGKGRFAEV) and Lys277 contribute to the ATP site. The active-site Proton acceptor is the Asp379. Residues Ser409, Ser548, and Ser553 each carry the phosphoserine modification. The segment at 546-567 (RLSGRSCSQEKIPEDGSLNTTK) is disordered.

Belongs to the protein kinase superfamily. TKL Ser/Thr protein kinase family. TGFB receptor subfamily. Homodimer. Heterohexamer; TGFB1, TGFB2 and TGFB3 homodimeric ligands assemble a functional receptor composed of two TGFBR1 and TGFBR2 heterodimers to form a ligand-receptor heterohexamer. The respective affinity of TGFRB1 and TGFRB2 for the ligands may modulate the kinetics of assembly of the receptor and may explain the different biological activities of TGFB1, TGFB2 and TGFB3. Component of a complex composed of TSC22D1 (via N-terminus), TGFBR1 and TGFBR2; the interaction between TSC22D1 and TGFBR1 is inhibited by SMAD7 and promoted by TGFB1. Interacts with DAXX. Interacts with DYNLT4. Interacts with ZFYVE9; ZFYVE9 recruits SMAD2 and SMAD3 to the TGF-beta receptor. Interacts with and is activated by SCUBE3; this interaction does not affect TGFB1-binding to TGFBR2. Interacts with VPS39; this interaction is independent of the receptor kinase activity and of the presence of TGF-beta. Interacts with CLU. Mg(2+) is required as a cofactor. The cofactor is Mn(2+). Phosphorylated on a Ser/Thr residue in the cytoplasmic domain.

The protein resides in the cell membrane. The protein localises to the membrane raft. The catalysed reaction is L-threonyl-[receptor-protein] + ATP = O-phospho-L-threonyl-[receptor-protein] + ADP + H(+). The enzyme catalyses L-seryl-[receptor-protein] + ATP = O-phospho-L-seryl-[receptor-protein] + ADP + H(+). Functionally, transmembrane serine/threonine kinase forming with the TGF-beta type I serine/threonine kinase receptor, TGFBR1, the non-promiscuous receptor for the TGF-beta cytokines TGFB1, TGFB2 and TGFB3. Transduces the TGFB1, TGFB2 and TGFB3 signal from the cell surface to the cytoplasm and is thus regulating a plethora of physiological and pathological processes including cell cycle arrest in epithelial and hematopoietic cells, control of mesenchymal cell proliferation and differentiation, wound healing, extracellular matrix production, immunosuppression and carcinogenesis. The formation of the receptor complex composed of 2 TGFBR1 and 2 TGFBR2 molecules symmetrically bound to the cytokine dimer results in the phosphorylation and the activation of TGFRB1 by the constitutively active TGFBR2. Activated TGFBR1 phosphorylates SMAD2 which dissociates from the receptor and interacts with SMAD4. The SMAD2-SMAD4 complex is subsequently translocated to the nucleus where it modulates the transcription of the TGF-beta-regulated genes. This constitutes the canonical SMAD-dependent TGF-beta signaling cascade. Also involved in non-canonical, SMAD-independent TGF-beta signaling pathways. This Rattus norvegicus (Rat) protein is TGF-beta receptor type-2 (Tgfbr2).